The primary structure comprises 415 residues: Transcriptional regulator fogI (415 aa).

The segment at residues 12–39 (CNACNESKVRCSQTKPTCARCERNKTTC) is a DNA-binding region (zn(2)-C6 fungal-type). A disordered region spans residues 50–153 (DAPPISLSHS…ILSPANLDLP (104 aa)). 2 stretches are compositionally biased toward low complexity: residues 80–102 (VHIP…STTT) and 123–135 (QFFA…HQQP).

The protein localises to the nucleus. Functionally, transcriptional regulator that postively regulates the expression of the gene cluster that mediates the biosynthesis of flavoglaucin and congeners (including aspergin, dihydroauroglaucin and auroglaucin), prenylated salicylaldehyde derivatives carrying a saturated or an unsaturated C-7 side chain. This chain is Transcriptional regulator fogI, found in Aspergillus ruber (strain CBS 135680).